Consider the following 102-residue polypeptide: Small ribosomal subunit protein uS10 (102 aa).

The protein belongs to the universal ribosomal protein uS10 family. As to quaternary structure, part of the 30S ribosomal subunit.

Functionally, involved in the binding of tRNA to the ribosomes. The polypeptide is Small ribosomal subunit protein uS10 (Carboxydothermus hydrogenoformans (strain ATCC BAA-161 / DSM 6008 / Z-2901)).